We begin with the raw amino-acid sequence, 330 residues long: MKQHYIRSQQQISFVKEMFSRQLAQQLGLMEVQAPILSRVGDGTQDNLSGSENAVQVKVKTLPGHSYEVVHSLAKWKRQTLGRFGFGPGEGIYTHMKALRPDEDKLTPIHSVYVDQWDWEKVMPSERRDLAYLQETVRGIWAAIKATERAVCAEHELTPFLPGEIQFLHSEALLARYPDLDAKGRERAIAKELGAVFLIGIGGALSHGERHDVRAPDYDDWSSHSELGLAGLNGDILVWNPVLEDSFEISSMGIRVDAEALRRQLAITGDEGRLQYDWHRDLLAERMPQTIGGGIGQSRLAMLLLQKEHIGQVQVGVWPSEMKAAIPGML.

The protein belongs to the class-II aminoacyl-tRNA synthetase family. AsnA subfamily.

It is found in the cytoplasm. It catalyses the reaction L-aspartate + NH4(+) + ATP = L-asparagine + AMP + diphosphate + H(+). Its pathway is amino-acid biosynthesis; L-asparagine biosynthesis; L-asparagine from L-aspartate (ammonia route): step 1/1. This is Aspartate--ammonia ligase from Aeromonas salmonicida (strain A449).